A 458-amino-acid polypeptide reads, in one-letter code: Bifunctional protein HldE (458 aa).

A ribokinase region spans residues 1-311 (MVNVLVVGDL…ENLKSKKSGF (311 aa)). Residue 189-192 (NKKE) participates in ATP binding. Asp257 is an active-site residue. Residues 333–458 (FTNGCFDILH…TTNIINKIKG (126 aa)) form a cytidylyltransferase region.

This sequence in the N-terminal section; belongs to the carbohydrate kinase PfkB family. The protein in the C-terminal section; belongs to the cytidylyltransferase family. In terms of assembly, homodimer.

It catalyses the reaction D-glycero-beta-D-manno-heptose 7-phosphate + ATP = D-glycero-beta-D-manno-heptose 1,7-bisphosphate + ADP + H(+). The catalysed reaction is D-glycero-beta-D-manno-heptose 1-phosphate + ATP + H(+) = ADP-D-glycero-beta-D-manno-heptose + diphosphate. It functions in the pathway nucleotide-sugar biosynthesis; ADP-L-glycero-beta-D-manno-heptose biosynthesis; ADP-L-glycero-beta-D-manno-heptose from D-glycero-beta-D-manno-heptose 7-phosphate: step 1/4. It participates in nucleotide-sugar biosynthesis; ADP-L-glycero-beta-D-manno-heptose biosynthesis; ADP-L-glycero-beta-D-manno-heptose from D-glycero-beta-D-manno-heptose 7-phosphate: step 3/4. In terms of biological role, catalyzes the phosphorylation of D-glycero-D-manno-heptose 7-phosphate at the C-1 position to selectively form D-glycero-beta-D-manno-heptose-1,7-bisphosphate. Catalyzes the ADP transfer from ATP to D-glycero-beta-D-manno-heptose 1-phosphate, yielding ADP-D-glycero-beta-D-manno-heptose. The chain is Bifunctional protein HldE from Campylobacter fetus subsp. fetus (strain 82-40).